The primary structure comprises 482 residues: O-acyltransferase ausP (482 aa).

Active-site proton acceptor residues include His180 and Asp412.

Belongs to the plant acyltransferase family. As to quaternary structure, monomer.

It participates in secondary metabolite biosynthesis; terpenoid biosynthesis. Its function is as follows. O-acyltransferase; part of the gene cluster B that mediates the biosynthesis of the fungal meroterpenoid acetoxydehydroaustin. The first step of the pathway is the synthesis of 3,5-dimethylorsellinic acid by the polyketide synthase ausA. 3,5-dimethylorsellinic acid is then prenylated by the polyprenyl transferase ausN. Further epoxidation by the FAD-dependent monooxygenase ausM and cyclization by the probable terpene cyclase ausL lead to the formation of protoaustinoid A. Protoaustinoid A is then oxidized to spiro-lactone preaustinoid A3 by the combined action of the FAD-binding monooxygenases ausB and ausC, and the dioxygenase ausE. Acid-catalyzed keto-rearrangement and ring contraction of the tetraketide portion of preaustinoid A3 by ausJ lead to the formation of preaustinoid A4. The aldo-keto reductase ausK, with the help of ausH, is involved in the next step by transforming preaustinoid A4 into isoaustinone which is in turn hydroxylated by the P450 monooxygenase ausI to form austinolide. The cytochrome P450 monooxygenase ausG then modifies austinolide to austinol. Austinol is further acetylated to austin by the O-acetyltransferase ausP, which spontaneously changes to dehydroaustin. The cytochrome P450 monooxygenase then converts dehydroaustin is into 7-dehydrodehydroaustin. The hydroxylation catalyzed by ausR permits the second O-acetyltransferase ausQ to add an additional acetyl group to the molecule, leading to the formation of acetoxydehydroaustin. Due to genetic rearrangements of the clusters and the subsequent loss of some enzymes, the end product of the Penicillium brasilianum austinoid biosynthesis clusters is acetoxydehydroaustin. This chain is O-acyltransferase ausP, found in Penicillium brasilianum.